The sequence spans 202 residues: uncharacterized protein (202 aa).

The tract at residues 118–202 (SSVSPVSSKK…KVSGTKKVKA (85 aa)) is disordered. Ser-121 carries the phosphoserine modification. 2 stretches are compositionally biased toward basic residues: residues 142 to 163 (EKSK…KSKR) and 186 to 202 (SSKS…KVKA).

The protein resides in the nucleus. It is found in the nucleolus. This is an uncharacterized protein from Schizosaccharomyces pombe (strain 972 / ATCC 24843) (Fission yeast).